The following is a 457-amino-acid chain: tRNA-2-methylthio-N(6)-dimethylallyladenosine synthase (457 aa).

An MTTase N-terminal domain is found at Lys-3–Ala-120. Positions 12, 49, 83, 157, 161, and 164 each coordinate [4Fe-4S] cluster. Positions Arg-143–Arg-377 constitute a Radical SAM core domain. The TRAM domain occupies Arg-380–Leu-447.

Belongs to the methylthiotransferase family. MiaB subfamily. Monomer. The cofactor is [4Fe-4S] cluster.

It localises to the cytoplasm. It carries out the reaction N(6)-dimethylallyladenosine(37) in tRNA + (sulfur carrier)-SH + AH2 + 2 S-adenosyl-L-methionine = 2-methylsulfanyl-N(6)-dimethylallyladenosine(37) in tRNA + (sulfur carrier)-H + 5'-deoxyadenosine + L-methionine + A + S-adenosyl-L-homocysteine + 2 H(+). Functionally, catalyzes the methylthiolation of N6-(dimethylallyl)adenosine (i(6)A), leading to the formation of 2-methylthio-N6-(dimethylallyl)adenosine (ms(2)i(6)A) at position 37 in tRNAs that read codons beginning with uridine. This chain is tRNA-2-methylthio-N(6)-dimethylallyladenosine synthase, found in Burkholderia ambifaria (strain ATCC BAA-244 / DSM 16087 / CCUG 44356 / LMG 19182 / AMMD) (Burkholderia cepacia (strain AMMD)).